The following is a 386-amino-acid chain: Microtubule-binding protein TANGLED1 (386 aa).

Disordered regions lie at residues 83–105 (RMRGGASAQKRSPSGKFGGGVGG), 140–202 (AAGA…RVRS), 244–266 (HASTSAATDPCATPSPSKKQKRL), 303–330 (PARPAAVSPPPPVKAQASPAKTRRCSFS), and 345–386 (RLSL…ISSR). Positions 170–180 (RARRAREKQSH) are enriched in basic residues. Positions 181–193 (RGGAATRGADAAT) are enriched in low complexity. Positions 375 to 386 (TVRTVSSKISSR) are enriched in polar residues.

Expressed in vegetative shoot tips consisting of leaf primordia and the bases of immature leaves, the shoot apical meristem, and unexpanded stem tissue. Strongly expressed in tissues enriched in dividing cells: ear primordia and embryos.

Its subcellular location is the cytoplasm. The protein localises to the cytoskeleton. It is found in the spindle. The protein resides in the phragmoplast. In terms of biological role, is required for spatial control cell division during leaf development. Through an association with microtubules, acts both for the positioning of cytoskeletal arrays that establish planes of cell division during prophase and for spatial guidance of expanding phragmoplasts toward preestablished cortical division sites (CDS) during cytokinesis. The polypeptide is Microtubule-binding protein TANGLED1 (TAN1) (Zea mays (Maize)).